The following is a 172-amino-acid chain: MADARSLHRPLGFGVAAIVLLLDQISKWAIMGPVALRERGLIEITGFFDLRWVENYGVSMGFLIAGSDRERWLLVAGTALIAAGIVAWIWREKAKGDVVALGLVLGGAIGNIADRTRLGYVADFLDPHIGDWHPFLVFNVADAAITIGVLILVLRALLVREPKVPAENVDAV.

2 consecutive transmembrane segments (helical) span residues 70-90 (ERWL…AWIW) and 94-114 (AKGD…NIAD). Active-site residues include Asp123 and Asp142. The chain crosses the membrane as a helical span at residues 134 to 154 (PFLVFNVADAAITIGVLILVL).

This sequence belongs to the peptidase A8 family.

The protein localises to the cell inner membrane. The catalysed reaction is Release of signal peptides from bacterial membrane prolipoproteins. Hydrolyzes -Xaa-Yaa-Zaa-|-(S,diacylglyceryl)Cys-, in which Xaa is hydrophobic (preferably Leu), and Yaa (Ala or Ser) and Zaa (Gly or Ala) have small, neutral side chains.. Its pathway is protein modification; lipoprotein biosynthesis (signal peptide cleavage). Its function is as follows. This protein specifically catalyzes the removal of signal peptides from prolipoproteins. This chain is Lipoprotein signal peptidase, found in Rhizorhabdus wittichii (strain DSM 6014 / CCUG 31198 / JCM 15750 / NBRC 105917 / EY 4224 / RW1) (Sphingomonas wittichii).